Consider the following 851-residue polypeptide: Nucleolar RNA helicase 2 (851 aa).

Residues 1 to 260 (MPGKLRSGAK…IPVEQKEGAF (260 aa)) form a disordered region. Serine 7 and serine 13 each carry phosphoserine. Basic and acidic residues-rich tracts occupy residues 26 to 42 (PSEKKTRKEKTKSKTEE) and 99 to 113 (EPLEKQADSETKEII). Lysine 39 carries the N6-acetyllysine modification. Repeat copies occupy residues 117-153 (PSEEEADMPKPKKMKKGKEANGDAGEKSPKLKNGLSQ), 154-190 (PSEEEADIPKPKKMKKGKEANGDAGEKSPKLKNGLSQ), and 191-227 (PSEEEVDIPKPKKMKKGKEASGDAGEKSPRLKDGLSQ). The tract at residues 117–227 (PSEEEADMPK…SPRLKDGLSQ (111 aa)) is 3 X 37 AA tandem repeats. Serine 118 carries the post-translational modification Phosphoserine. Residues 133 to 145 (GKEANGDAGEKSP) are compositionally biased toward basic and acidic residues. Residue lysine 134 is modified to N6-acetyllysine. Phosphoserine occurs at positions 144, 155, 181, 192, 218, 236, 243, 244, and 245. Residues 170 to 182 (GKEANGDAGEKSP) show a composition bias toward basic and acidic residues. The segment covering 207-223 (GKEASGDAGEKSPRLKD) has biased composition (basic and acidic residues). The segment covering 226–237 (SQPSEPKSNSSD) has biased composition (polar residues). Over residues 246–257 (ETEKEIPVEQKE) the composition is skewed to basic and acidic residues. Positions 258 to 286 (GAFSNFPISEETVKLLKARGVNFLFPIQA) match the Q motif motif. The region spanning 289 to 468 (FHHVYSGKDL…KKYMKSTYEQ (180 aa)) is the Helicase ATP-binding domain. Residue 302–309 (ARTGTGKT) coordinates ATP. Threonine 368 is subject to Phosphothreonine. The short motif at 411–414 (DEVD) is the DEAD box element. Residues 501-645 (DVIRVYSGHQ…GVPSATEIIK (145 aa)) form the Helicase C-terminal domain. Phosphoserine is present on serine 639. N6-acetyllysine is present on lysine 672. Residues 783–851 (QPELEGPPDG…KRSFSKAFGQ (69 aa)) are disordered. 3 repeat units span residues 807-811 (FRGQR), 817-823 (FRGQGQR), and 829-833 (FRGQR). Residues 807–833 (FRGQRGGSRNFRGQGQRGGSRNFRGQR) are 3 X 5 AA repeats. Lysine 847 carries the post-translational modification N6-acetyllysine.

It belongs to the DEAD box helicase family. DDX21/DDX50 subfamily. As to quaternary structure, homodimer; homodimerizes via its N-terminus. Found in a multi-helicase-TICAM1 complex at least composed of DHX36, DDX1, DDX21 and TICAM1; this complex exists in resting cells with or without poly(I:C) RNA ligand stimulation. Interacts (via C-terminus) with TICAM1 (via TIR domain). Interacts with DHX36 (via C-terminus); this interaction serves as bridges to TICAM1. Interacts (via C-terminus) with DDX1 (via B30.2/SPRY domain); this interaction serves as bridges to TICAM1. Component of the B-WICH complex, at least composed of SMARCA5/SNF2H, BAZ1B/WSTF, SF3B1, DEK, MYO1C, ERCC6, MYBBP1A and DDX21. Interacts with C1QBP. Interacts with JUN. Interacts with WDR46. Interacts with MCM3AP. Interacts with WDR43. Interacts with KPNA3. Interacts with GID4. Acetylation by CREBBP/CBP inhibits the helicase activity. Deacetylation by SIRT7 promotes the helicase activity and overcomes R-loop-mediated stalling of RNA polymerases. In terms of tissue distribution, highly expressed in liver and testis. Expressed at lower level in brain, lungs, and skeletal muscle.

Its subcellular location is the nucleus. The protein resides in the nucleolus. The protein localises to the nucleoplasm. It is found in the cytoplasm. It localises to the cytosol. Its subcellular location is the mitochondrion. It catalyses the reaction ATP + H2O = ADP + phosphate + H(+). Its activity is regulated as follows. Acetylation inhibits the helicase activity. RNA helicase that acts as a sensor of the transcriptional status of both RNA polymerase (Pol) I and II: promotes ribosomal RNA (rRNA) processing and transcription from polymerase II (Pol II). Binds various RNAs, such as rRNAs, snoRNAs, 7SK and, at lower extent, mRNAs. In the nucleolus, localizes to rDNA locus, where it directly binds rRNAs and snoRNAs, and promotes rRNA transcription, processing and modification. Required for rRNA 2'-O-methylation, possibly by promoting the recruitment of late-acting snoRNAs SNORD56 and SNORD58 with pre-ribosomal complexes. In the nucleoplasm, binds 7SK RNA and is recruited to the promoters of Pol II-transcribed genes: acts by facilitating the release of P-TEFb from inhibitory 7SK snRNP in a manner that is dependent on its helicase activity, thereby promoting transcription of its target genes. Functions as cofactor for JUN-activated transcription: required for phosphorylation of JUN at 'Ser-77'. Can unwind double-stranded RNA (helicase) and can fold or introduce a secondary structure to a single-stranded RNA (foldase). Together with SIRT7, required to prevent R-loop-associated DNA damage and transcription-associated genomic instability: deacetylation by SIRT7 activates the helicase activity, thereby overcoming R-loop-mediated stalling of RNA polymerases. Involved in rRNA processing. May bind to specific miRNA hairpins. Component of a multi-helicase-TICAM1 complex that acts as a cytoplasmic sensor of viral double-stranded RNA (dsRNA) and plays a role in the activation of a cascade of antiviral responses including the induction of pro-inflammatory cytokines via the adapter molecule TICAM1. The chain is Nucleolar RNA helicase 2 (Ddx21) from Mus musculus (Mouse).